The primary structure comprises 279 residues: Bifunctional protein FolD (279 aa).

Residues 164–166, S189, and I230 contribute to the NADP(+) site; that span reads GRS.

It belongs to the tetrahydrofolate dehydrogenase/cyclohydrolase family. In terms of assembly, homodimer.

The catalysed reaction is (6R)-5,10-methylene-5,6,7,8-tetrahydrofolate + NADP(+) = (6R)-5,10-methenyltetrahydrofolate + NADPH. The enzyme catalyses (6R)-5,10-methenyltetrahydrofolate + H2O = (6R)-10-formyltetrahydrofolate + H(+). It functions in the pathway one-carbon metabolism; tetrahydrofolate interconversion. Its function is as follows. Catalyzes the oxidation of 5,10-methylenetetrahydrofolate to 5,10-methenyltetrahydrofolate and then the hydrolysis of 5,10-methenyltetrahydrofolate to 10-formyltetrahydrofolate. This chain is Bifunctional protein FolD, found in Agathobacter rectalis (strain ATCC 33656 / DSM 3377 / JCM 17463 / KCTC 5835 / VPI 0990) (Eubacterium rectale).